Here is a 158-residue protein sequence, read N- to C-terminus: Non-secretory ribonuclease (158 aa).

A signal peptide spans 1–27 (MVPKLFTSQICLLLLLGLLGVEGSLHA). The active-site Proton acceptor is the His42. Cystine bridges form between Cys50–Cys110, Cys64–Cys121, Cys82–Cys136, and Cys89–Cys98. Residue Tyr60 is modified to 3'-nitrotyrosine. Residue 65–69 (KNQNT) participates in substrate binding. Asn86, Asn92, and Asn111 each carry an N-linked (GlcNAc...) asparagine glycan. The active-site Proton donor is His153.

Belongs to the pancreatic ribonuclease family. In terms of assembly, interacts with and forms a tight 1:1 complex with RNH1. Dimerization of two such complexes may occur.

It is found in the lysosome. The protein resides in the cytoplasmic granule. The enzyme catalyses an [RNA] containing cytidine + H2O = an [RNA]-3'-cytidine-3'-phosphate + a 5'-hydroxy-ribonucleotide-3'-[RNA].. The catalysed reaction is an [RNA] containing uridine + H2O = an [RNA]-3'-uridine-3'-phosphate + a 5'-hydroxy-ribonucleotide-3'-[RNA].. Functionally, this is a non-secretory ribonuclease. It is a pyrimidine specific nuclease with a slight preference for U. Cytotoxin and helminthotoxin. Possesses a wide variety of biological activities. This chain is Non-secretory ribonuclease (RNASE2), found in Aotus trivirgatus (Three-striped night monkey).